Consider the following 316-residue polypeptide: B3 domain-containing protein Os04g0581400 (316 aa).

Residues 1 to 100 (MEFATTSSRF…GSGGGGGGED (100 aa)) are disordered. Positions 13–36 (EEEEEEEGEQEMEQEQDEEEEEAE) are enriched in acidic residues. The span at 46–77 (TSAAAAATASSSSPTSVSPSATASAAASTSAS) shows a compositional bias: low complexity. Residues 88–98 (GASGSGGGGGG) are compositionally biased toward gly residues. A DNA-binding region (TF-B3) is located at residues 110–215 (FDKVVTPSDV…RLFIDWKRRA (106 aa)). The disordered stretch occupies residues 239–290 (GGAGASSCRPRRPPRSTSITAFARASTSATSTPLCRRGSSSSSAPQGRGFIS). Positions 253–270 (RSTSITAFARASTSATST) are enriched in low complexity.

It is found in the nucleus. In Oryza sativa subsp. japonica (Rice), this protein is B3 domain-containing protein Os04g0581400.